A 442-amino-acid chain; its full sequence is Putative major teichoic acid biosynthesis protein C (442 aa).

Its function is as follows. Unknown. Might be involved in poly(glycerol phosphate) teichoic acid biosynthesis. The protein is Putative major teichoic acid biosynthesis protein C (tagC) of Bacillus subtilis (strain 168).